The chain runs to 93 residues: Stromal cell-derived factor 1 (93 aa).

An N-terminal signal peptide occupies residues 1–21 (MDAKVVAVLALVLAALCLSDG). The Receptor activation motif motif lies at 22 to 23 (KP). The interval 29–33 (RCPCR) is receptor and heparin binding. Disulfide bonds link C30–C55 and C32–C71. 3 receptor binding regions span residues 39-41 (VAR), 48-50 (KIL), and 60-70 (VARLKNNNRQV). Heparin is bound by residues 41–51 (RANVKHLKILN), R62, Q69, and K85.

It belongs to the intercrine alpha (chemokine CxC) family. In terms of assembly, monomer or homodimer; in equilibrium. Dimer formation is induced by non acidic pH and the presence of multivalent anions, and by binding to CXCR4 or heparin. Monomeric form is required for full chemotactic activity and resistance to ischemia/reperfusion injury, whereas the dimeric form acts as a partial agonist of CXCR4, stimulating Ca2+ mobilization but with no chemotactic activity and instead acts as a selective antagonist that blocks chemotaxis induced by the monomeric form. Interacts with the N-terminus of ACKR3. Interacts with integrin subunit ITGB3 (via the allosteric site (site 2)). Interacts with TNFAIP6 (via Link domain).

Its subcellular location is the secreted. Chemoattractant active on T-lymphocytes and monocytes but not neutrophils. Activates the C-X-C chemokine receptor CXCR4 to induce a rapid and transient rise in the level of intracellular calcium ions and chemotaxis. Also binds to atypical chemokine receptor ACKR3, which activates the beta-arrestin pathway and acts as a scavenger receptor for SDF-1. Acts as a positive regulator of monocyte migration and a negative regulator of monocyte adhesion via the LYN kinase. Binds to the allosteric site (site 2) of integrins and activates integrins ITGAV:ITGB3, ITGA4:ITGB1 and ITGA5:ITGB1 in a CXCR4-independent manner. Stimulates migration of monocytes and T-lymphocytes through its receptors, CXCR4 and ACKR3, and decreases monocyte adherence to surfaces coated with ICAM-1, a ligand for beta-2 integrins. SDF1A/CXCR4 signaling axis inhibits beta-2 integrin LFA-1 mediated adhesion of monocytes to ICAM-1 through LYN kinase. Plays a protective role after myocardial infarction. Has several critical functions during embryonic development; required for B-cell lymphopoiesis, myelopoiesis in bone marrow and heart ventricular septum formation. Stimulates the proliferation of bone marrow-derived B-cell progenitors in the presence of IL7 as well as growth of stromal cell-dependent pre-B-cells. The polypeptide is Stromal cell-derived factor 1 (CXCL12) (Felis catus (Cat)).